The sequence spans 248 residues: 3-deoxy-manno-octulosonate cytidylyltransferase (248 aa).

It belongs to the KdsB family.

It is found in the cytoplasm. It carries out the reaction 3-deoxy-alpha-D-manno-oct-2-ulosonate + CTP = CMP-3-deoxy-beta-D-manno-octulosonate + diphosphate. The protein operates within nucleotide-sugar biosynthesis; CMP-3-deoxy-D-manno-octulosonate biosynthesis; CMP-3-deoxy-D-manno-octulosonate from 3-deoxy-D-manno-octulosonate and CTP: step 1/1. Its pathway is bacterial outer membrane biogenesis; lipopolysaccharide biosynthesis. Functionally, activates KDO (a required 8-carbon sugar) for incorporation into bacterial lipopolysaccharide in Gram-negative bacteria. This Escherichia coli O139:H28 (strain E24377A / ETEC) protein is 3-deoxy-manno-octulosonate cytidylyltransferase.